Consider the following 381-residue polypeptide: Succinate--CoA ligase [ADP-forming] subunit beta (381 aa).

Residues 9-236 enclose the ATP-grasp domain; it reads KTIFADAGIP…ESYEDDLERK (228 aa). ATP-binding positions include Lys-45, 52–54, Glu-91, Val-94, and Glu-99; that span reads GRG. Mg(2+) is bound by residues Asn-191 and Asp-205. Substrate-binding positions include Asn-256 and 313 to 315; that span reads GIT.

Belongs to the succinate/malate CoA ligase beta subunit family. Heterotetramer of two alpha and two beta subunits. Mg(2+) serves as cofactor.

It carries out the reaction succinate + ATP + CoA = succinyl-CoA + ADP + phosphate. The enzyme catalyses GTP + succinate + CoA = succinyl-CoA + GDP + phosphate. It functions in the pathway carbohydrate metabolism; tricarboxylic acid cycle; succinate from succinyl-CoA (ligase route): step 1/1. Functionally, succinyl-CoA synthetase functions in the citric acid cycle (TCA), coupling the hydrolysis of succinyl-CoA to the synthesis of either ATP or GTP and thus represents the only step of substrate-level phosphorylation in the TCA. The beta subunit provides nucleotide specificity of the enzyme and binds the substrate succinate, while the binding sites for coenzyme A and phosphate are found in the alpha subunit. This chain is Succinate--CoA ligase [ADP-forming] subunit beta, found in Halorubrum lacusprofundi (strain ATCC 49239 / DSM 5036 / JCM 8891 / ACAM 34).